Here is a 394-residue protein sequence, read N- to C-terminus: Flap endonuclease 1-A (394 aa).

An N-domain region spans residues 1 to 105 (MGIKGLTGLL…GVLSKRLERR (105 aa)). Position 34 (Asp34) interacts with Mg(2+). DNA is bound by residues Arg47 and Arg71. 5 residues coordinate Mg(2+): Asp87, Glu159, Glu161, Asp180, and Asp182. Residues 123 to 254 (DVDRFSRRTV…KSALKLIREY (132 aa)) are I-domain. A DNA-binding site is contributed by Glu159. DNA-binding residues include Gly232 and Asp234. Residue Asp234 coordinates Mg(2+). Residues 341–349 (QQGRLDGFF) are interaction with PCNA. The interval 356 to 375 (KAAAPAPVGKAKGKGKVDAK) is disordered.

Belongs to the XPG/RAD2 endonuclease family. FEN1 subfamily. As to quaternary structure, interacts with PCNA. Three molecules of FEN1 bind to one PCNA trimer with each molecule binding to one PCNA monomer. PCNA stimulates the nuclease activity without altering cleavage specificity. Requires Mg(2+) as cofactor. Post-translationally, phosphorylated. Phosphorylation upon DNA damage induces relocalization to the nuclear plasma.

The protein resides in the nucleus. The protein localises to the nucleolus. It localises to the nucleoplasm. Its subcellular location is the mitochondrion. Its function is as follows. Structure-specific nuclease with 5'-flap endonuclease and 5'-3' exonuclease activities involved in DNA replication and repair. During DNA replication, cleaves the 5'-overhanging flap structure that is generated by displacement synthesis when DNA polymerase encounters the 5'-end of a downstream Okazaki fragment. It enters the flap from the 5'-end and then tracks to cleave the flap base, leaving a nick for ligation. Also involved in the long patch base excision repair (LP-BER) pathway, by cleaving within the apurinic/apyrimidinic (AP) site-terminated flap. Acts as a genome stabilization factor that prevents flaps from equilibrating into structures that lead to duplications and deletions. Also possesses 5'-3' exonuclease activity on nicked or gapped double-stranded DNA, and exhibits RNase H activity. Also involved in replication and repair of rDNA and in repairing mitochondrial DNA. This Laccaria bicolor (strain S238N-H82 / ATCC MYA-4686) (Bicoloured deceiver) protein is Flap endonuclease 1-A.